A 165-amino-acid polypeptide reads, in one-letter code: Small ribosomal subunit protein uS5 (165 aa).

Residues 10–73 (QIEKLISLNR…TSARKNLRFV (64 aa)) enclose the S5 DRBM domain.

It belongs to the universal ribosomal protein uS5 family. Part of the 30S ribosomal subunit. Contacts proteins S4 and S8.

With S4 and S12 plays an important role in translational accuracy. Its function is as follows. Located at the back of the 30S subunit body where it stabilizes the conformation of the head with respect to the body. The sequence is that of Small ribosomal subunit protein uS5 from Borreliella burgdorferi (strain ATCC 35210 / DSM 4680 / CIP 102532 / B31) (Borrelia burgdorferi).